The chain runs to 140 residues: ATP synthase epsilon chain (140 aa).

The protein belongs to the ATPase epsilon chain family. F-type ATPases have 2 components, CF(1) - the catalytic core - and CF(0) - the membrane proton channel. CF(1) has five subunits: alpha(3), beta(3), gamma(1), delta(1), epsilon(1). CF(0) has three main subunits: a, b and c.

Its subcellular location is the cell inner membrane. In terms of biological role, produces ATP from ADP in the presence of a proton gradient across the membrane. In Neisseria meningitidis serogroup B (strain ATCC BAA-335 / MC58), this protein is ATP synthase epsilon chain.